A 111-amino-acid chain; its full sequence is MISTVSLFWALCVVCIVNMARYFSSLRALLVVLRGCDPLLYQYVDGGGFFTTHGQPNKQVRLVWYIYAQRYRDHHDEEFIRRCERVRRQFLLTSALCGLVVVSLIALMIWH.

The chain crosses the membrane as a helical span at residues 1–21 (MISTVSLFWALCVVCIVNMAR). Residues 22-89 (YFSSLRALLV…IRRCERVRRQ (68 aa)) lie on the Cytoplasmic side of the membrane. A helical transmembrane segment spans residues 90 to 110 (FLLTSALCGLVVVSLIALMIW). Position 111 (histidine 111) is a topological domain, periplasmic.

The protein belongs to the universal stress protein B family.

The protein localises to the cell inner membrane. In Salmonella choleraesuis (strain SC-B67), this protein is Universal stress protein B (uspB).